A 279-amino-acid chain; its full sequence is Putative pyruvate, phosphate dikinase regulatory protein (279 aa).

153-160 contributes to the ADP binding site; sequence GISRTSKT.

Belongs to the pyruvate, phosphate/water dikinase regulatory protein family. PDRP subfamily.

It catalyses the reaction N(tele)-phospho-L-histidyl/L-threonyl-[pyruvate, phosphate dikinase] + ADP = N(tele)-phospho-L-histidyl/O-phospho-L-threonyl-[pyruvate, phosphate dikinase] + AMP + H(+). It carries out the reaction N(tele)-phospho-L-histidyl/O-phospho-L-threonyl-[pyruvate, phosphate dikinase] + phosphate + H(+) = N(tele)-phospho-L-histidyl/L-threonyl-[pyruvate, phosphate dikinase] + diphosphate. In terms of biological role, bifunctional serine/threonine kinase and phosphorylase involved in the regulation of the pyruvate, phosphate dikinase (PPDK) by catalyzing its phosphorylation/dephosphorylation. This is Putative pyruvate, phosphate dikinase regulatory protein from Brucella melitensis biotype 2 (strain ATCC 23457).